A 788-amino-acid polypeptide reads, in one-letter code: MNASKASKKRKAVTRDVEEEAGVFSGDELNADNLDGALSDNANDLSSDEDDSDSEIELVDEFSEDDEDDEELDSDEIPSDGEDAVKKKSVTTTDKSGEIAEDAESSSEEEELDFRIEKDANGNDRFIYDEINPDDNSEYSDVEENSNTIGDIPLSFYDQYPHIGYDINGKKILRPAKGEALDALLDSIEIPKGWTGLTDPSTGKPLELSQDELELLRKVQMNEIPEEGYNPYEPTVEWFTSQQEIMPLSAAPEPKRRFVPSKHEAKRVMKIVKAIREGRILPFKPPTEEDKEEDNVINYDLWADEAERPDHIMHIPAPKLPPPGYEESYHPPPEYLPDKKERKAWEEADPEDREQEFLPNDFGSLRRVPGYENFVKEKFERCLDLYLAPRVRRSKLNIDPESLLPKLPSPEELKPFPTACATVFRGHKGRVRSLAVDPSGLWLATAGDDGTVRVWELLTGRQLWSVKLSEEDPVNVVRWRPGKDALILAAAAGDDIYLAVPPIVDPEVEKASLDILDAGWGHAASVPALTPAEANKKNNPPKWIRPSSSLQESGVCAIIPLRYIAKSLSWHRRGDYFVTVCPGSSTPASVAIAIHTLSKHLTQYPFRRRIKGGGSPQAAHFHPSKPILFVANQRSIRAYDLSRQLLVKILQPGARWISSFDIHPTSSTASGGDNLIVGSYDRRLLWHDLELSQRPYKTLRYHRKAIRAVKFHPGGRYPLFADASDDGSLQIFHGSVTGDMLSNATIVPLKVLKGHKITGELGVLDIDWHPREPWCVSAGADGTCRLWM.

Positions 1 to 12 (MNASKASKKRKA) are enriched in basic residues. Disordered regions lie at residues 1-118 (MNAS…RIEK) and 321-344 (PPPGYEESYHPPPEYLPDKKERKA). Acidic residues-rich tracts occupy residues 46-82 (SSDEDDSDSEIELVDEFSEDDEDDEELDSDEIPSDGE) and 99-112 (IAEDAESSSEEEEL). Residues 321-335 (PPPGYEESYHPPPEY) are compositionally biased toward pro residues. WD repeat units follow at residues 426-465 (GHKGRVRSLAVDPSGLWLATAGDDGTVRVWELLTGRQLWS), 469-509 (SEED…PEVE), 611-649 (KGGGSPQAAHFHPSKPILFVANQRSIRAYDLSRQLLVKI), 652-697 (PGAR…RPYK), 701-742 (YHRK…DMLS), and 758-788 (TGELGVLDIDWHPREPWCVSAGADGTCRLWM).

It belongs to the WD repeat BOP1/ERB1 family. In terms of assembly, component of the NOP7 complex, composed of erb1, nop7 and ytm1. The complex is held together by erb1, which interacts with nop7 via its N-terminal domain and with ytm1 via a high-affinity interaction between the seven-bladed beta-propeller domains of the 2 proteins. The NOP7 complex associates with the 66S pre-ribosome.

Its subcellular location is the nucleus. The protein localises to the nucleolus. The protein resides in the nucleoplasm. Component of the NOP7 complex, which is required for maturation of the 25S and 5.8S ribosomal RNAs and formation of the 60S ribosome. In Aspergillus clavatus (strain ATCC 1007 / CBS 513.65 / DSM 816 / NCTC 3887 / NRRL 1 / QM 1276 / 107), this protein is Ribosome biogenesis protein erb1 (erb1).